The chain runs to 78 residues: Large ribosomal subunit protein uL10 (78 aa).

Residues 40 to 50 (AAAAAATAPAA) are compositionally biased toward low complexity. The interval 40–78 (AAAAAATAPAAETKKEEKKEEKKEETEESDDDIGLSLFH) is disordered. The segment covering 51 to 64 (ETKKEEKKEEKKEE) has biased composition (basic and acidic residues).

It belongs to the universal ribosomal protein uL10 family. P0 forms a pentameric complex by interaction with dimers of P1 and P2.

Its subcellular location is the nucleus. It localises to the cytoplasm. In terms of biological role, ribosomal protein P0 is the functional equivalent of E.coli protein L10. This is Large ribosomal subunit protein uL10 from Culicoides nubeculosus (Biting midge).